A 138-amino-acid polypeptide reads, in one-letter code: Basic phospholipase A2 chain HDP-1P (138 aa).

The first 16 residues, 1-16 (MRILWIVAVCLIGVEG), serve as a signal peptide directing secretion. Intrachain disulfides connect cysteine 42-cysteine 131, cysteine 44-cysteine 60, cysteine 59-cysteine 111, cysteine 65-cysteine 138, cysteine 66-cysteine 104, cysteine 73-cysteine 97, and cysteine 91-cysteine 102. Ca(2+)-binding residues include tyrosine 43, glycine 45, and glycine 47. Residue histidine 63 is part of the active site. Aspartate 64 contacts Ca(2+). Residue aspartate 105 is part of the active site.

Heterodimer; non-covalently linked. The toxic basic protein has phospholipase A2 activity (chain HDP-1P) and the non-toxic acidic protein functions as its inhibitor (chain HPD-1I (AC A4VBF0)). The cofactor is Ca(2+). In terms of tissue distribution, expressed by the venom gland.

It is found in the secreted. It carries out the reaction a 1,2-diacyl-sn-glycero-3-phosphocholine + H2O = a 1-acyl-sn-glycero-3-phosphocholine + a fatty acid + H(+). Enzymatic activity and neurotoxicity are inhibited by Triton X-100, which has been determined to be located in the center of the hydrophobic channel of the enzyme. Functionally, heterodimer: shows the same activities as the monomer, but with a lower potency. Monomer: snake venom phospholipase A2 (PLA2) that shows presynaptic neurotoxicity, anticoagulant activity and that weakly inhibits ADP-induced platelet aggregation. Inhibits exocytosis in pancreatic beta cells, confirming it can act presynaptically in inhibiting the exocytosis of neurotransmitters in neurons. PLA2 catalyzes the calcium-dependent hydrolysis of the 2-acyl groups in 3-sn-phosphoglycerides. This chain is Basic phospholipase A2 chain HDP-1P, found in Vipera nikolskii (Nikolsky's adder).